Reading from the N-terminus, the 397-residue chain is MTRVALAFSGGLDTTVCVSLLKEEYGYDEVIGVTVDVGQPATEFEEAQATADAHGIDLHVVDATAEFVDLCFDSVRANATYQGYPLGTALARPIIAESIVSVAKAENCDALAHGCTGKGNDQLRFEAVWRNSDLTVIAPIRELELTREWEQEYAAEHNLPVQAGNDGVWSIDTNLWSRSIEGGKLEDPNYTPPEDVYEWTADPATTTETELITIGFESGYPVSINDNAHDPVELVETLNEVAGEHGVGRTDMMEDRMLGLKVRENYEHPAATTLLNAHKALEGLVLTKDERDFKRHIDSEWAQKGYEGLVDHPLMDALEGFIDATQQRVTGTVTIKFEGGQARPVGRESAAAAYSADAASFNTSSIGEITQQDATGIAKYHGYQGRIANAATETDTK.

ATP is bound at residue 7–15 (AFSGGLDTT). Tyr84 serves as a coordination point for L-citrulline. Gly114 serves as a coordination point for ATP. L-aspartate-binding residues include Thr116, Asn120, and Asp121. Asn120 serves as a coordination point for L-citrulline. The L-citrulline site is built by Arg124, Ser170, Ser179, Glu254, and Tyr266.

Belongs to the argininosuccinate synthase family. Type 1 subfamily. As to quaternary structure, homotetramer.

It localises to the cytoplasm. The enzyme catalyses L-citrulline + L-aspartate + ATP = 2-(N(omega)-L-arginino)succinate + AMP + diphosphate + H(+). The protein operates within amino-acid biosynthesis; L-arginine biosynthesis; L-arginine from L-ornithine and carbamoyl phosphate: step 2/3. The chain is Argininosuccinate synthase from Haloquadratum walsbyi (strain DSM 16790 / HBSQ001).